The chain runs to 283 residues: tRNA pseudouridine synthase A (283 aa).

Aspartate 52 functions as the Nucleophile in the catalytic mechanism. Tyrosine 148 lines the substrate pocket.

This sequence belongs to the tRNA pseudouridine synthase TruA family. In terms of assembly, homodimer.

It catalyses the reaction uridine(38/39/40) in tRNA = pseudouridine(38/39/40) in tRNA. Its function is as follows. Formation of pseudouridine at positions 38, 39 and 40 in the anticodon stem and loop of transfer RNAs. This is tRNA pseudouridine synthase A from Orientia tsutsugamushi (strain Ikeda) (Rickettsia tsutsugamushi).